We begin with the raw amino-acid sequence, 251 residues long: MKIFSWVANKISGKQEANRFPANSSAPYRANVSDCRKDEFSDWPQSLLAIGTFGNKQIEEVAQVENSSDNVQSVQDTVKFTEEEVDKIRKEFETLLAIKDQAEAQRSHDDDQVGLQKRADGEDNEKHIRQLINKRIIVSKSKNSLGKKGNTLKPRSVASLLKLFMCKGGFTSVVPEPRNTFPQSRMEKLLKAILQKKIHPQNSSTLVAKRHLDWKPDETEINECLEDALRDLDDDGAKWVKTDSEYIVLEM.

The IGT motif motif lies at S46–T52. Residues V64–Q105 adopt a coiled-coil conformation.

It belongs to the LAZY family.

Functionally, involved in the control of root growth angle. Involved in cell elongation in the root tip that causes asymmetric root growth and downward bending of the root in response to gravity. This Oryza sativa subsp. japonica (Rice) protein is Protein DEEPER ROOTING 1.